The following is a 300-amino-acid chain: Transcription initiation factor IIB (300 aa).

Residues 3–34 form a TFIIB-type zinc finger; the sequence is KQRVCPVCGSTEFIYDPERGEIVCARCGYVIE. Residues Cys7, Cys10, Cys26, and Cys29 each coordinate Zn(2+). Tandem repeats lie at residues 114 to 197 and 210 to 291.

This sequence belongs to the TFIIB family.

Functionally, stabilizes TBP binding to an archaeal box-A promoter. Also responsible for recruiting RNA polymerase II to the pre-initiation complex (DNA-TBP-TFIIB). This Pyrococcus abyssi (strain GE5 / Orsay) protein is Transcription initiation factor IIB.